We begin with the raw amino-acid sequence, 1047 residues long: Ubiquitin carboxyl-terminal hydrolase 28 (1047 aa).

2 disordered regions span residues 60-95 (DQEP…DPEK) and 110-138 (SPKA…RCEV). Positions 94–113 (EKKGDVHSAVAYGQLESPKA) constitute a UIM domain. Residues 111–128 (PKAHAAERPQEVHSPEHK) show a composition bias toward basic and acidic residues. Positions 156–651 (VGMKNIGNTC…SAYCLMYISD (496 aa)) constitute a USP domain. Cys165 (nucleophile) is an active-site residue. Residues 461 to 486 (STEDSQMMDRQSQGESLILGTPSQPD) are compositionally biased toward polar residues. Residues 461–528 (STEDSQMMDR…SEPPAEMSDC (68 aa)) form a disordered region. A compositionally biased stretch (basic and acidic residues) spans 489 to 498 (LDGKDGKPED). The segment covering 504–516 (ANSSPQQQLNAPL) has biased composition (polar residues). The active-site Proton acceptor is the His601. Positions 694–735 (EAEEWEEEQSCKIPSTASESQELSPESGLDPPAAHEQSLRSL) are disordered. The span at 705 to 717 (KIPSTASESQELS) shows a compositional bias: polar residues.

This sequence belongs to the peptidase C19 family. USP28 subfamily.

It localises to the nucleus. The protein resides in the nucleoplasm. The enzyme catalyses Thiol-dependent hydrolysis of ester, thioester, amide, peptide and isopeptide bonds formed by the C-terminal Gly of ubiquitin (a 76-residue protein attached to proteins as an intracellular targeting signal).. Functionally, deubiquitinase involved in DNA damage response checkpoint and MYC proto-oncogene stability. Involved in DNA damage induced apoptosis by specifically deubiquitinating proteins of the DNA damage pathway such as CLSPN. Also involved in G2 DNA damage checkpoint, by deubiquitinating CLSPN, and preventing its degradation by the anaphase promoting complex/cyclosome (APC/C). Specifically deubiquitinates MYC in the nucleoplasm, leading to prevent MYC degradation by the proteasome. Deubiquitinates ZNF304, hence may prevent ZNF304 degradation by the proteasome, leading to the activated KRAS-mediated promoter hypermethylation and transcriptional silencing of tumor suppressor genes (TSGs). The chain is Ubiquitin carboxyl-terminal hydrolase 28 (USP28) from Gallus gallus (Chicken).